We begin with the raw amino-acid sequence, 302 residues long: Probable alpha-L-glutamate ligase (302 aa).

Residues leucine 105–glutamate 288 form the ATP-grasp domain. Residues lysine 142, glutamate 179 to phenylalanine 180, aspartate 188, and arginine 212 to asparagine 214 each bind ATP. Residues aspartate 249, glutamate 261, and asparagine 263 each contribute to the Mg(2+) site. 3 residues coordinate Mn(2+): aspartate 249, glutamate 261, and asparagine 263.

It belongs to the RimK family. Mg(2+) is required as a cofactor. The cofactor is Mn(2+).

This chain is Probable alpha-L-glutamate ligase, found in Legionella pneumophila (strain Paris).